The chain runs to 880 residues: Interference hedgehog (880 aa).

Residues 1–20 form the signal peptide; it reads MTLLTSSLLFFSLLTSRLEA. Residues 21-703 lie on the Extracellular side of the membrane; that stretch reads IPVLEKSPAH…ETFNMSPMLT (683 aa). Ig-like C2-type domains follow at residues 45–142, 132–234, 252–340, and 346–432; these read PGVR…IARL, PLVV…IQLT, PHLL…YIKV, and PQIV…LQVN. Intrachain disulfides connect Cys68-Cys126, Cys173-Cys220, Cys276-Cys324, and Cys367-Cys414. N-linked (GlcNAc...) asparagine glycosylation is found at Asn102 and Asn209. Positions 426–467 are disordered; sequence GTLLQVNPKQIQEPRESGGTHRPKPNQGSKQKQMYPPTPPNV. 2 Fibronectin type-III domains span residues 461–567 and 575–670; these read PPTP…LQPG and VPEL…TQRP. Asn466 carries N-linked (GlcNAc...) asparagine glycosylation. Positions 497, 501, 503, and 541 each coordinate heparin. Asn557 carries N-linked (GlcNAc...) asparagine glycosylation. The disordered stretch occupies residues 662–697; it reads LKQGRTQRPKTSTTEEPTLQMGDRDTTTPSHNETFN. Composition is skewed to polar residues over residues 665–678 and 688–697; these read GRTQ…TEEP and TTPSHNETFN. N-linked (GlcNAc...) asparagine glycosylation is present at Asn693. Residues 704 to 724 form a helical membrane-spanning segment; the sequence is GTIGGGAVLILLLISTCLCVC. Topologically, residues 725-880 are cytoplasmic; sequence RRRSSRSRGN…SSGSLNSVGV (156 aa). Disordered stretches follow at residues 728–762 and 775–880; these read SSRS…QRQR and QQQQ…SVGV. 2 stretches are compositionally biased toward low complexity: residues 823–837 and 864–880; these read RAGG…NNNN and SSRS…SVGV.

The protein belongs to the immunoglobulin superfamily. IHOG family. Homodimer. Heterotetramer; 2 iHog chains bind 2 hh chains when facilitated by heparin, heparin is required to promote high-affinity interactions between hh and iHog.

The protein resides in the membrane. Its function is as follows. Mediates response to the active Hedgehog (Hh) protein signal in embryos, functioning upstream or at the level of patched (ptc). In Drosophila yakuba (Fruit fly), this protein is Interference hedgehog.